A 156-amino-acid chain; its full sequence is Small ribosomal subunit protein uS7c (156 aa).

This sequence belongs to the universal ribosomal protein uS7 family. In terms of assembly, part of the 30S ribosomal subunit.

The protein localises to the plastid. It localises to the chloroplast. Functionally, one of the primary rRNA binding proteins, it binds directly to 16S rRNA where it nucleates assembly of the head domain of the 30S subunit. In Ostreococcus tauri, this protein is Small ribosomal subunit protein uS7c (rps7).